The primary structure comprises 97 residues: Aspartyl/glutamyl-tRNA(Asn/Gln) amidotransferase subunit C (97 aa).

It belongs to the GatC family. As to quaternary structure, heterotrimer of A, B and C subunits.

The enzyme catalyses L-glutamyl-tRNA(Gln) + L-glutamine + ATP + H2O = L-glutaminyl-tRNA(Gln) + L-glutamate + ADP + phosphate + H(+). The catalysed reaction is L-aspartyl-tRNA(Asn) + L-glutamine + ATP + H2O = L-asparaginyl-tRNA(Asn) + L-glutamate + ADP + phosphate + 2 H(+). In terms of biological role, allows the formation of correctly charged Asn-tRNA(Asn) or Gln-tRNA(Gln) through the transamidation of misacylated Asp-tRNA(Asn) or Glu-tRNA(Gln) in organisms which lack either or both of asparaginyl-tRNA or glutaminyl-tRNA synthetases. The reaction takes place in the presence of glutamine and ATP through an activated phospho-Asp-tRNA(Asn) or phospho-Glu-tRNA(Gln). This chain is Aspartyl/glutamyl-tRNA(Asn/Gln) amidotransferase subunit C, found in Prochlorococcus marinus (strain MIT 9515).